The sequence spans 456 residues: Signal transduction histidine-protein kinase ArlS (456 aa).

2 helical membrane passes run 13–33 (LITT…IIFF) and 157–177 (IVAL…SYIF). Residues 179-232 (SQITKPIVTMSNKMNQIRRDGFQNKLELTTNYEETDNLIDTFNEMMYQIEESFN) form the HAMP domain. The 217-residue stretch at 240–456 (DASHELRTPL…TFKISFPVLN (217 aa)) folds into the Histidine kinase domain. At His243 the chain carries Phosphohistidine; by autocatalysis.

Post-translationally, autophosphorylated.

It is found in the cell membrane. It carries out the reaction ATP + protein L-histidine = ADP + protein N-phospho-L-histidine.. In terms of biological role, member of the two-component regulatory system ArlS/ArlR. ArlS probably functions as a sensor protein kinase which is autophosphorylated at a histidine residue and transfers its phosphate group to ArlR. This Staphylococcus epidermidis (strain ATCC 12228 / FDA PCI 1200) protein is Signal transduction histidine-protein kinase ArlS (arlS).